Consider the following 488-residue polypeptide: Transmembrane protein 39A (488 aa).

2 N-linked (GlcNAc...) asparagine glycosylation sites follow: Asn31 and Asn39. A run of 8 helical transmembrane segments spans residues 72 to 92 (SLLFEFLFFIYLLVALFIQYI), 110 to 130 (TSLNFHLIDYHLAAFITVMLA), 154 to 174 (VLISARLVLLTLCGWVLCWTL), 182 to 202 (SVLNLLFLGYPFGVYVPLCCF), 287 to 307 (EVLFNSLFSAYYVAFLPLCFV), 319 to 339 (CEHLIMVWINAFVMLTTQLLP), 420 to 440 (LLNLLILIEGSVVFYQLYSLL), and 446 to 466 (NHTLSMALILFCNYYVLFKLL).

It belongs to the TMEM39 family. In terms of assembly, interacts with SACM1L, SEC23A and SEC24A. (Microbial infection) Interacts with encephalomyocarditis virus (EMCV) major capsid proteins VP1 and VP2. As to expression, up-regulated in brain tumor glioblastoma multiforme cells (at protein level).

The protein localises to the endoplasmic reticulum membrane. Functionally, regulates autophagy by controlling the spatial distribution and levels of the intracellular phosphatidylinositol 4-phosphate (PtdIns(4)P) pools. Modulates (PtdIns(4)P) levels by regulating the ER-to-Golgi trafficking of the phosphatidylinositide phosphatase SACM1L. (Microbial infection) Positively regulates the replication of encephalomyocarditis virus (EMCV) via autophagy-dependent pathway. In Homo sapiens (Human), this protein is Transmembrane protein 39A (TMEM39A).